The primary structure comprises 184 residues: Gastrokine-2 (184 aa).

Residues 1–20 (MKPLVAFLVVLSIFGIQSQA) form the signal peptide. The BRICHOS domain maps to 54–151 (HSGSCSSTTI…LCKHMPLYEG (98 aa)). A disulfide bond links cysteine 81 and cysteine 143.

As to quaternary structure, heterodimer with TFF1; disulfide linked. Interacts with TFF2. Stomach foveolar epithelium and duodenal Brunner's glands.

It is found in the secreted. It localises to the golgi apparatus. This Mus musculus (Mouse) protein is Gastrokine-2 (Gkn2).